The sequence spans 112 residues: Low molecular weight protein antigen 6 (112 aa).

It localises to the secreted. In Mycobacterium bovis (strain ATCC BAA-935 / AF2122/97), this protein is Low molecular weight protein antigen 6 (cfp6).